Consider the following 123-residue polypeptide: Cholecystokinin (123 aa).

The signal sequence occupies residues 1–19 (MNAGICVCVLLAALSTSSC). Residues 20–103 (LSLPAVSEDG…MGNNHRIKDR (84 aa)) constitute a propeptide that is removed on maturation. The tract at residues 43–67 (HTRAAPSSGQLSLLSKAEDDEEPRS) is disordered. Tyr-105 carries the sulfotyrosine modification. Residue Phe-111 is modified to Phenylalanine amide. The propeptide occupies 115 to 123 (SAEEYEYSS). Sulfotyrosine is present on residues Tyr-119 and Tyr-121.

The protein belongs to the gastrin/cholecystokinin family. Post-translationally, the precursor is cleaved by proteases to produce a number of active cholecystokinins. As to expression, expressed in the ovary, kidney, gill, gastrointestinal tract and pituitary. Differentially expressed in the brain in the optic tectum-thalamus, hypothalamus, telencephalon, olfactory bulb and tract, preoptic region and posterior brain region. Expression is strongest in the hypothalamus, where localization is to the posterior ventrolateral region. Expression in the brain is transiently increased 2 hours after feeding. Abundant in the sensory layers of the vagal lobe and along the border of the sensory region of the lobe and the deep fiber laye. Also present in the facial lobe and throughout the glossopharyngeal lobe.

It is found in the secreted. In terms of biological role, this peptide hormone induces gall bladder contraction and the release of pancreatic enzymes in the gut. Induces the secretion of gonadotropin and growth hormone from the pituitary. Suppresses food intake and decreases the expression of preprosomatostatin genes in the forebrain. In Carassius auratus (Goldfish), this protein is Cholecystokinin (cck).